Here is a 303-residue protein sequence, read N- to C-terminus: Recombination-associated protein RdgC (303 aa).

Belongs to the RdgC family.

It localises to the cytoplasm. It is found in the nucleoid. Its function is as follows. May be involved in recombination. This chain is Recombination-associated protein RdgC, found in Shewanella frigidimarina (strain NCIMB 400).